Consider the following 605-residue polypeptide: MTGASLALTAAVVAHAYYLKNQFYPTVVYLTKSSPSMAVLYIQAFVLVFLLGKFMGKVFFGQLRAAEMEHLLERSWYAVTETCLAFTVFRDDFSPRFVALFTLLLFLKCFHWLAEDRVDFMERSPNISWLFHFRILALMLLLGVLDAFFVSHAYHSLVIRGASVQLVFGFEYAILMTVILTVFIKYILHSVDLQSENPWDNKAVYMLYTELFTGFIKVLLYVAFMTIMVKVHTFPLFAIRPMYLAMRQFKKAVTDAIMSRRAIRNMNTLYPDATAEELQAMDNVCIICREEMVTGAKRLPCNHIFHTSCLRSWFQRQQTCPTCRMDVLRASLPTQPQTPTEQQNQHQNQAQQQPTPVIPPQPNFPPGILPPFPPGMFPLWPPMGPFPPVPGAPGGNPPDEANPGSSSGSSPRPGETSNVGSESQPGAALPGFPFPPPFLGMPILPPFGLPPMPMPPAGFTGLTDEELRAMEGHERQNLEARLQCLQNIHTLLDAAMLQINQYLTVLASIGPPQPPISSTSTSTSSAASASTAPTTSNISEPVIPVDTTSTVTNTESSQQSAPPAPVSVETLSGAEGGETTTEEPDNVELRRRRLQKLETGTTDSQ.

Residues 1–19 traverse the membrane as a helical segment; the sequence is MTGASLALTAAVVAHAYYL. Topologically, residues 20–35 are lumenal; sequence KNQFYPTVVYLTKSSP. Residues 36–56 traverse the membrane as a helical segment; that stretch reads SMAVLYIQAFVLVFLLGKFMG. At 57–92 the chain is on the cytoplasmic side; it reads KVFFGQLRAAEMEHLLERSWYAVTETCLAFTVFRDD. Residues 93-113 traverse the membrane as a helical segment; that stretch reads FSPRFVALFTLLLFLKCFHWL. Over 114–129 the chain is Lumenal; that stretch reads AEDRVDFMERSPNISW. A helical transmembrane segment spans residues 130 to 150; sequence LFHFRILALMLLLGVLDAFFV. Residues 151 to 163 are Cytoplasmic-facing; it reads SHAYHSLVIRGAS. A helical membrane pass occupies residues 164 to 184; that stretch reads VQLVFGFEYAILMTVILTVFI. Topologically, residues 185 to 218 are lumenal; the sequence is KYILHSVDLQSENPWDNKAVYMLYTELFTGFIKV. A helical transmembrane segment spans residues 219 to 239; it reads LLYVAFMTIMVKVHTFPLFAI. The interaction with p53/TP53 stretch occupies residues 230–264; that stretch reads KVHTFPLFAIRPMYLAMRQFKKAVTDAIMSRRAIR. Topologically, residues 240–605 are cytoplasmic; that stretch reads RPMYLAMRQF…KLETGTTDSQ (366 aa). The Zn(2+) site is built by Cys-285, Cys-288, Cys-301, His-303, His-306, Cys-309, Cys-320, and Cys-323. An RING-type; atypical zinc finger spans residues 285-324; sequence CIICREEMVTGAKRLPCNHIFHTSCLRSWFQRQQTCPTCR. A compositionally biased stretch (low complexity) spans 334-355; the sequence is TQPQTPTEQQNQHQNQAQQQPT. The segment at 334-433 is disordered; the sequence is TQPQTPTEQQ…QPGAALPGFP (100 aa). A compositionally biased stretch (pro residues) spans 356-391; sequence PVIPPQPNFPPGILPPFPPGMFPLWPPMGPFPPVPG. The span at 403-414 shows a compositional bias: low complexity; the sequence is PGSSSGSSPRPG. Polar residues predominate over residues 415–424; sequence ETSNVGSESQ. Positions 465 to 496 form a coiled coil; it reads EELRAMEGHERQNLEARLQCLQNIHTLLDAAM. Residues 513–605 are disordered; sequence QPPISSTSTS…KLETGTTDSQ (93 aa). Positions 516–539 are enriched in low complexity; sequence ISSTSTSTSSAASASTAPTTSNIS. Positions 546–555 are enriched in polar residues; that stretch reads DTTSTVTNTE. A compositionally biased stretch (low complexity) spans 556–579; the sequence is SSQQSAPPAPVSVETLSGAEGGET.

It belongs to the HRD1 family. Homodimer.

It is found in the endoplasmic reticulum membrane. It catalyses the reaction S-ubiquitinyl-[E2 ubiquitin-conjugating enzyme]-L-cysteine + [acceptor protein]-L-lysine = [E2 ubiquitin-conjugating enzyme]-L-cysteine + N(6)-ubiquitinyl-[acceptor protein]-L-lysine.. It participates in protein modification; protein ubiquitination. In terms of biological role, E3 ubiquitin-protein ligase which accepts ubiquitin specifically from endoplasmic reticulum-associated UBC7 E2 ligase and transfers it to substrates, promoting their degradation. Component of the endoplasmic reticulum quality control (ERQC) system also called ER-associated degradation (ERAD) involved in ubiquitin-dependent degradation of misfolded endoplasmic reticulum proteins. Also promotes the degradation of normal but naturally short-lived proteins. Protects cells from ER stress-induced apoptosis. Sequesters p53 in the cytoplasm and promotes its degradation, thereby negatively regulating its biological function in transcription, cell cycle regulation and apoptosis. The protein is E3 ubiquitin-protein ligase synoviolin A (syvn1-a) of Xenopus laevis (African clawed frog).